Reading from the N-terminus, the 249-residue chain is Cytoplasmic envelopment protein 1 (249 aa).

The protein belongs to the herpesviridae cytoplasmic envelopment protein 1 family.

It is found in the virion. The protein localises to the virion tegument. Its subcellular location is the host cytoplasm. It localises to the host Golgi apparatus. Functionally, plays a critical role in cytoplasmic virus egress. Participates in the final step of tegumentation and envelope acquisition within the host cytoplasm. This chain is Cytoplasmic envelopment protein 1 (U75), found in Human herpesvirus 6A (strain Uganda-1102) (HHV-6 variant A).